The primary structure comprises 172 residues: Water stress-inducible protein Rab21 (172 aa).

Residues 1–172 (MEHQGQHGHV…KIKEKLPGQH (172 aa)) form a disordered region. The Type A repeat unit spans residues 3-28 (HQGQHGHVTSRVDEYGNPVGTGAGHG). The span at 21-65 (VGTGAGHGQMGTAGMGTHGTTGGMGTHGTTGGMGTHGTTGTGGGQ) shows a compositional bias: gly residues. One copy of the Type B repeat lies at 98–115 (RRKKGIKEKIKEKLPGGN). Over residues 124 to 139 (GGTGGAYGQQGHGTGM) the composition is skewed to gly residues. Residues 125 to 149 (GTGGAYGQQGHGTGMTTGTTGAHGT) form a Type A repeat. The span at 140-153 (TTGTTGAHGTTTTD) shows a compositional bias: low complexity. A compositionally biased stretch (basic and acidic residues) spans 154–172 (TGEKKGIMDKIKEKLPGQH). The stretch at 156–172 (EKKGIMDKIKEKLPGQH) is one Type B repeat.

It belongs to the plant dehydrin family.

Its subcellular location is the cytoplasm. The sequence is that of Water stress-inducible protein Rab21 (RAB21) from Oryza sativa subsp. indica (Rice).